Consider the following 288-residue polypeptide: ATP synthase gamma chain (288 aa).

It belongs to the ATPase gamma chain family. F-type ATPases have 2 components, CF(1) - the catalytic core - and CF(0) - the membrane proton channel. CF(1) has five subunits: alpha(3), beta(3), gamma(1), delta(1), epsilon(1). CF(0) has three main subunits: a, b and c.

It is found in the cell inner membrane. Its function is as follows. Produces ATP from ADP in the presence of a proton gradient across the membrane. The gamma chain is believed to be important in regulating ATPase activity and the flow of protons through the CF(0) complex. This Acidithiobacillus ferrooxidans (strain ATCC 23270 / DSM 14882 / CIP 104768 / NCIMB 8455) (Ferrobacillus ferrooxidans (strain ATCC 23270)) protein is ATP synthase gamma chain.